We begin with the raw amino-acid sequence, 299 residues long: DNA-binding transcriptional activator HetR (299 aa).

Residue Ser-152 is part of the active site.

The protein belongs to the peptidase S48 family. In terms of assembly, homodimer; disulfide-linked.

Controls heterocyst differentiation. Dimerization is required for DNA-binding. Has both a protease and a DNA-binding activity. Increased expression leads to more heterocysts than usual. The sequence is that of DNA-binding transcriptional activator HetR from Nostoc punctiforme (strain ATCC 29133 / PCC 73102).